Consider the following 453-residue polypeptide: Chromosomal replication initiator protein DnaA (453 aa).

Residues 1–73 are domain I, interacts with DnaA modulators; the sequence is MELSPQDLWT…ADVVEEILGY (73 aa). A domain II region spans residues 73-110; the sequence is YSIDIQLTSTQGENIAIVGETQVSAYYPTLSGEHPKPI. Residues 111-327 form a domain III, AAA+ region region; sequence KLNPKYTFSR…GALIRAITYI (217 aa). ATP-binding residues include Gly155, Gly157, Lys158, and Thr159. The domain IV, binds dsDNA stretch occupies residues 328–453; the sequence is SISGLSMTVE…HLASRTQKTT (126 aa).

This sequence belongs to the DnaA family. As to quaternary structure, oligomerizes as a right-handed, spiral filament on DNA at oriC.

The protein resides in the cytoplasm. In terms of biological role, plays an essential role in the initiation and regulation of chromosomal replication. ATP-DnaA binds to the origin of replication (oriC) to initiate formation of the DNA replication initiation complex once per cell cycle. Binds the DnaA box (a 9 base pair repeat at the origin) and separates the double-stranded (ds)DNA. Forms a right-handed helical filament on oriC DNA; dsDNA binds to the exterior of the filament while single-stranded (ss)DNA is stabiized in the filament's interior. The ATP-DnaA-oriC complex binds and stabilizes one strand of the AT-rich DNA unwinding element (DUE), permitting loading of DNA polymerase. After initiation quickly degrades to an ADP-DnaA complex that is not apt for DNA replication. Binds acidic phospholipids. The chain is Chromosomal replication initiator protein DnaA from Gloeothece citriformis (strain PCC 7424) (Cyanothece sp. (strain PCC 7424)).